The following is a 603-amino-acid chain: Replication protein A 70 kDa DNA-binding subunit (603 aa).

The interval 131–152 (PKPAVTSNSKPIAKKEPSHNNN) is disordered. At S160 the chain carries Phosphoserine. The segment at residues 179–252 (WVIKARVTSK…QLKPANKQYS (74 aa)) is a DNA-binding region (OB). A Phosphoserine modification is found at S420. The C4-type zinc-finger motif lies at 464-486 (CPQSDCNKKVVDEGNDQFRCEKC).

This sequence belongs to the replication factor A protein 1 family. As to quaternary structure, component of the heterotrimeric canonical replication protein A complex (RPA).

The protein localises to the nucleus. As part of the heterotrimeric replication protein A complex (RPA/RP-A), binds and stabilizes single-stranded DNA intermediates, that form during DNA replication or upon DNA stress. It prevents their reannealing and in parallel, recruits and activates different proteins and complexes involved in DNA metabolism. Thereby, it plays an essential role both in DNA replication and the cellular response to DNA damage. The protein is Replication protein A 70 kDa DNA-binding subunit of Drosophila melanogaster (Fruit fly).